The primary structure comprises 188 residues: Elongation factor P (188 aa).

K34 carries the N6-(3,6-diaminohexanoyl)-5-hydroxylysine modification.

Belongs to the elongation factor P family. May be beta-lysylated on the epsilon-amino group of Lys-34 by the combined action of EpmA and EpmB, and then hydroxylated on the C5 position of the same residue by EpmC (if this protein is present). Lysylation is critical for the stimulatory effect of EF-P on peptide-bond formation. The lysylation moiety may extend toward the peptidyltransferase center and stabilize the terminal 3-CCA end of the tRNA. Hydroxylation of the C5 position on Lys-34 may allow additional potential stabilizing hydrogen-bond interactions with the P-tRNA.

It localises to the cytoplasm. The protein operates within protein biosynthesis; polypeptide chain elongation. Functionally, involved in peptide bond synthesis. Alleviates ribosome stalling that occurs when 3 or more consecutive Pro residues or the sequence PPG is present in a protein, possibly by augmenting the peptidyl transferase activity of the ribosome. Modification of Lys-34 is required for alleviation. This is Elongation factor P from Xanthomonas campestris pv. campestris (strain B100).